Here is a 638-residue protein sequence, read N- to C-terminus: Threonine--tRNA ligase 2 (638 aa).

The 64-residue stretch at 1–64 (MSKHVHIQLP…EEDAELSIVT (64 aa)) folds into the TGS domain. A catalytic region spans residues 245–535 (DHRKLGKQLG…LIEHYGGAFP (291 aa)). 3 residues coordinate Zn(2+): Cys-336, His-387, and His-512.

Belongs to the class-II aminoacyl-tRNA synthetase family. As to quaternary structure, homodimer. Zn(2+) is required as a cofactor.

The protein localises to the cytoplasm. It carries out the reaction tRNA(Thr) + L-threonine + ATP = L-threonyl-tRNA(Thr) + AMP + diphosphate + H(+). Its function is as follows. Catalyzes the attachment of threonine to tRNA(Thr) in a two-step reaction: L-threonine is first activated by ATP to form Thr-AMP and then transferred to the acceptor end of tRNA(Thr). Also edits incorrectly charged L-seryl-tRNA(Thr). This Bacillus subtilis (strain 168) protein is Threonine--tRNA ligase 2 (thrZ).